Reading from the N-terminus, the 179-residue chain is Large ribosomal subunit protein uL5c (179 aa).

This sequence belongs to the universal ribosomal protein uL5 family. In terms of assembly, part of the 50S ribosomal subunit; contacts the 5S rRNA.

Its subcellular location is the plastid. It is found in the chloroplast. Binds 5S rRNA, forms part of the central protuberance of the 50S subunit. The sequence is that of Large ribosomal subunit protein uL5c (rpl5) from Gracilaria tenuistipitata var. liui (Red alga).